The sequence spans 375 residues: MSTAGKVIKCKAAVLWEVKKPFSIEEVEVAPPKAHEVRIKMVAVGICRSDDHVVSGTLVTPLPAILGHEAAGIVEGVGEGVTTVKPGDKVIPLFTPQCGKCRVCKNPESNYCFKNDLSNPRGTMQDGTRRFTCGGKPIHHFLGISTFSQYTVVDENAVAKIDAASPLEKVCLIGCGFSTGYGPAVKVAKVTPGSTCAVFGLGGVGLSAVMGCKAAGAARIIAVDINKDKFAKAKELGATECINPQDYKKPIQEVLKEMTDGGVDFSFEVIGRLDTIMASLLCCHEACGTSVIVGVPPDSQNLSINPVLLLTGRTWKGAIFGGFKSKESVPKLVSDFMAKKFSLDALITNVLPFEKINEGFDLLRSGKSIRTILMF.

Ser2 carries the post-translational modification N-acetylserine. Ser23 bears the Phosphoserine mark. Zn(2+) is bound by residues Cys47, His68, Cys98, Cys101, Cys104, Cys112, and Cys175. NAD(+) is bound by residues 200-205 (GLGGVG), Asp224, Lys229, Ile270, 293-295 (VGV), 318-320 (AIF), and Arg370.

This sequence belongs to the zinc-containing alcohol dehydrogenase family. As to quaternary structure, dimer of identical or non-identical chains of class I alcohol dehydrogenase: ADH1A, ADH1B, and ADH1C. The cofactor is Zn(2+). Expressed in kidney.

It localises to the cytoplasm. It carries out the reaction a primary alcohol + NAD(+) = an aldehyde + NADH + H(+). The enzyme catalyses ethanol + NAD(+) = acetaldehyde + NADH + H(+). Alcohol dehydrogenase. Exhibits high activity for ethanol oxidation and plays a major role in ethanol catabolism. The polypeptide is Alcohol dehydrogenase 1C (ADH1C) (Papio hamadryas (Hamadryas baboon)).